The sequence spans 363 residues: Spermatogenesis-associated protein 22 (363 aa).

Polar residues-rich tracts occupy residues 1 to 12, 30 to 48, 98 to 108, and 140 to 157; these read MKRSLNENSARS, QPLT…TPSD, IQSNTGRSQGG, and NDGK…QQKQ. 3 disordered regions span residues 1–51, 98–127, and 140–170; these read MKRS…DNYD, IQSN…NKND, and NDGK…SRNK.

Component of a multiprotein complex with MEIOB and RPA2. Interacts with MEIOB. Interacts with the complex BRME1:HSF2BP:BRCA2. As to expression, highly expressed in adult testis.

It localises to the chromosome. Its function is as follows. Meiosis-specific protein required for homologous recombination in meiosis I. This chain is Spermatogenesis-associated protein 22, found in Homo sapiens (Human).